The following is a 149-amino-acid chain: MEFSRDAGMMMENKRNVCSLGESSIKRHKSDLSFSSKERKDKVGERISALQQIVSPYGKTDTASVLLDAMHYIEFLHEQVKVLSAPYLQTVPDATQEELEQYSLRNRGLCLVPMENTVGVAQSNGADIWAPVKTPLSPAFSVTSQSPFR.

The bHLH domain maps to 27-76 (RHKSDLSFSSKERKDKVGERISALQQIVSPYGKTDTASVLLDAMHYIEFL).

This sequence belongs to the bHLH protein family.

Its subcellular location is the nucleus. This is Transcription factor bHLH153 from Arabidopsis thaliana (Mouse-ear cress).